Consider the following 1010-residue polypeptide: Protein translocase subunit SecA (1010 aa).

ATP is bound by residues Gln-86, 104–108 (GEGKT), and Asp-535. Positions 893–904 (QAGAADGNAKGA) are enriched in low complexity. The disordered stretch occupies residues 893–916 (QAGAADGNAKGARTVRHSVRLPGR). The Zn(2+) site is built by Cys-920, Cys-922, Cys-931, and His-932. Over residues 950–981 (QHAAVAADTPAQPAPQATATRPPTSQVPRGRA) the composition is skewed to low complexity. Positions 950–1010 (QHAAVAADTP…RGKGASARKK (61 aa)) are disordered.

This sequence belongs to the SecA family. Monomer and homodimer. Part of the essential Sec protein translocation apparatus which comprises SecA, SecYEG and auxiliary proteins SecDF. Other proteins may also be involved. Zn(2+) serves as cofactor.

It is found in the cell membrane. The protein localises to the cytoplasm. It catalyses the reaction ATP + H2O + cellular proteinSide 1 = ADP + phosphate + cellular proteinSide 2.. Part of the Sec protein translocase complex. Interacts with the SecYEG preprotein conducting channel. Has a central role in coupling the hydrolysis of ATP to the transfer of proteins into and across the cell membrane, serving as an ATP-driven molecular motor driving the stepwise translocation of polypeptide chains across the membrane. This Roseiflexus sp. (strain RS-1) protein is Protein translocase subunit SecA.